Reading from the N-terminus, the 178-residue chain is ATP synthase subunit delta (178 aa).

This sequence belongs to the ATPase delta chain family. F-type ATPases have 2 components, F(1) - the catalytic core - and F(0) - the membrane proton channel. F(1) has five subunits: alpha(3), beta(3), gamma(1), delta(1), epsilon(1). F(0) has three main subunits: a(1), b(2) and c(10-14). The alpha and beta chains form an alternating ring which encloses part of the gamma chain. F(1) is attached to F(0) by a central stalk formed by the gamma and epsilon chains, while a peripheral stalk is formed by the delta and b chains.

The protein localises to the cell membrane. Its function is as follows. F(1)F(0) ATP synthase produces ATP from ADP in the presence of a proton or sodium gradient. F-type ATPases consist of two structural domains, F(1) containing the extramembraneous catalytic core and F(0) containing the membrane proton channel, linked together by a central stalk and a peripheral stalk. During catalysis, ATP synthesis in the catalytic domain of F(1) is coupled via a rotary mechanism of the central stalk subunits to proton translocation. Functionally, this protein is part of the stalk that links CF(0) to CF(1). It either transmits conformational changes from CF(0) to CF(1) or is implicated in proton conduction. The sequence is that of ATP synthase subunit delta from Streptococcus mutans serotype c (strain ATCC 700610 / UA159).